Consider the following 1401-residue polypeptide: Uveal autoantigen with coiled-coil domains and ankyrin repeats protein (1401 aa).

6 ANK repeats span residues 25 to 53 (LMRAAERGDVEKVSSILAKKGVNPGKLDV), 54 to 83 (EGRSAFHVVASKGNLECLNAILIHGVDITT), 87 to 116 (AGRNALHLAAKYGHALCLQKLLQYNCPTEH), 120 to 149 (QGRTALHDAAMADCPSSIQLLCDHGASVNA), 153 to 182 (DGRTPLVLATQMCRPTICQLLIDRGADINS), and 186 to 215 (QNRTALMLGCEYGCKDAVEVLIKNGADVTL). S265 is modified (phosphoserine). Coiled-coil stretches lie at residues 273 to 361 (TKSN…SRFK), 423 to 827 (ENEI…EKIY), and 856 to 1368 (ALSS…VIAI). K1020 participates in a covalent cross-link: Glycyl lysine isopeptide (Lys-Gly) (interchain with G-Cter in SUMO2).

As to quaternary structure, component of the apoptosome complex, composed of APAF1, pro-caspase-9 and UACA. In the complex, it probably interacts directly with APAF1. Interacts with LGALS3. Interacts with ARF6 and ACTB. Interacts with RAB39A. Highly expressed in muscle and heart, moderately in liver, kidney and pancreas, and weakly in placenta and lung.

It localises to the nucleus. It is found in the cytoplasm. Its subcellular location is the cytoskeleton. Regulates APAF1 expression and plays an important role in the regulation of stress-induced apoptosis. Promotes apoptosis by regulating three pathways, apoptosome up-regulation, LGALS3/galectin-3 down-regulation and NF-kappa-B inactivation. Regulates the redistribution of APAF1 into the nucleus after proapoptotic stress. Down-regulates the expression of LGALS3 by inhibiting NFKB1. Its function is as follows. Modulates isoactin dynamics to regulate the morphological alterations required for cell growth and motility. Interaction with ARF6 may modulate cell shape and motility after injury. May be involved in multiple neurite formation. This is Uveal autoantigen with coiled-coil domains and ankyrin repeats protein (UACA) from Bos taurus (Bovine).